The chain runs to 147 residues: Lipoprotein signal peptidase (147 aa).

A run of 4 helical transmembrane segments spans residues I10 to L30, G34 to F54, F59 to M79, and W87 to Y107. Catalysis depends on residues D112 and D130. A helical transmembrane segment spans residues L121–V141.

This sequence belongs to the peptidase A8 family.

The protein localises to the cell inner membrane. The enzyme catalyses Release of signal peptides from bacterial membrane prolipoproteins. Hydrolyzes -Xaa-Yaa-Zaa-|-(S,diacylglyceryl)Cys-, in which Xaa is hydrophobic (preferably Leu), and Yaa (Ala or Ser) and Zaa (Gly or Ala) have small, neutral side chains.. Its pathway is protein modification; lipoprotein biosynthesis (signal peptide cleavage). Functionally, this protein specifically catalyzes the removal of signal peptides from prolipoproteins. The polypeptide is Lipoprotein signal peptidase (Thermodesulfovibrio yellowstonii (strain ATCC 51303 / DSM 11347 / YP87)).